We begin with the raw amino-acid sequence, 356 residues long: Tyrosine recombinase XerS (356 aa).

In terms of domain architecture, Core-binding (CB) spans 16–121 (IMPWYVLDYY…ALSSLYKYLT (106 aa)). The 186-residue stretch at 169–354 (AFLDYVDKEY…VNDEQKNALD (186 aa)) folds into the Tyr recombinase domain. Residues Arg210, Lys234, His306, Arg309, and His332 contribute to the active site. Tyr341 functions as the O-(3'-phospho-DNA)-tyrosine intermediate in the catalytic mechanism.

The protein belongs to the 'phage' integrase family. XerS subfamily.

The protein resides in the cytoplasm. FtsK is required for recombination. In terms of biological role, site-specific tyrosine recombinase, which acts by catalyzing the cutting and rejoining of the recombining DNA molecules. Essential to convert dimers of the bacterial chromosome into monomers to permit their segregation at cell division. The polypeptide is Tyrosine recombinase XerS (Streptococcus pyogenes serotype M18 (strain MGAS8232)).